The primary structure comprises 121 residues: Protein SNORC (121 aa).

Residues 1–24 (MASCLALRMALLLVSGVLAPAVLT) form the signal peptide. Over 25 to 92 (DDVPQEPVPT…QGGGSLGPGA (68 aa)) the chain is Extracellular. The interval 28–84 (PQEPVPTLWNEPAELPSGEGPVESTSPGREPVDTGPPAPTVAPGPEDSTAQERLDQG) is disordered. A helical membrane pass occupies residues 93–113 (IAAIVIAALLATCVVLALVVV). Over 114-121 (ALRKFSAS) the chain is Cytoplasmic.

As to quaternary structure, interacts (via the extracellular domain) with FGF2. As to expression, expressed in cartilage.

It is found in the membrane. The protein localises to the cytoplasm. It localises to the secreted. The protein resides in the extracellular space. Its subcellular location is the extracellular matrix. Its function is as follows. Plays a role in the regulation of chondrocyte maturation and postnatal endochondral ossification. May inhibit cell growth stimulation induced by FGF2. The chain is Protein SNORC from Homo sapiens (Human).